The following is a 1362-amino-acid chain: Bromodomain-containing protein 4B (1362 aa).

6 disordered regions span residues 22-57 (EGAQ…QPKR), 200-243 (SLGD…HPPA), 274-367 (LANH…DSKT), 476-639 (DEPE…SYEE), 699-941 (CLRK…TQSP), and 953-1349 (SQAP…MNFQ). Residues 34–49 (QPQPQTPMMQTPPPEI) are compositionally biased toward pro residues. A Bromo 1 domain is found at 57-163 (RQTNQLQYLL…KLFLQKISEM (107 aa)). The span at 219–234 (TPTPPAVIRAPTPPQT) shows a compositional bias: pro residues. A compositionally biased stretch (basic and acidic residues) spans 326–342 (PRKESGRQIRPIKKTEV). Residues 348 to 358 (PAPPDLHPQPA) are compositionally biased toward pro residues. The 110-residue stretch at 365 to 474 (SKTSEQLRYC…DVFEMRFAKM (110 aa)) folds into the Bromo 2 domain. Residues 481–503 (APAPVPSPAPGPPAPSIKIPPPT) show a composition bias toward pro residues. The segment at 503 to 521 (TSSDTSSDSSSDSESSSDS) is NPS region. Over residues 504-516 (SSDTSSDSSSDSE) the composition is skewed to low complexity. The BID region stretch occupies residues 542–597 (QLAALSQPQPNKPKKKEREKRKEKHKRKEEVEETRKGRIREPPAKKPKKSVQVSGG). The span at 553-568 (KPKKKEREKRKEKHKR) shows a compositional bias: basic residues. The span at 569–585 (KEEVEETRKGRIREPPA) shows a compositional bias: basic and acidic residues. A compositionally biased stretch (pro residues) spans 606-621 (PPPVTRPARPAPPPAP). The 85-residue stretch at 623 to 707 (ESSEEDTQRC…SCLRKKRKPQ (85 aa)) folds into the NET domain. Residues 628–639 (DTQRCRPMSYEE) are compositionally biased toward basic and acidic residues. The segment covering 722–737 (SYSSSESESSSESSTS) has biased composition (low complexity). Over residues 750 to 766 (QKKKGHSGRESRKHHHP) the composition is skewed to basic residues. 2 stretches are compositionally biased toward pro residues: residues 772-793 (IAPP…PPPS) and 871-889 (PARP…PHHQ). Residues 893–905 (HVHHHHHHHHHAQ) are compositionally biased toward basic residues. Residues 926–941 (YLQQLHKSQQPPTQSP) show a composition bias toward polar residues. Composition is skewed to low complexity over residues 953–963 (SQAPMAAPAQS), 977–1006 (SSAS…QPAG), 1014–1028 (QQQQ…PALQ), and 1041–1050 (HQQAKQQQVI). The tract at residues 1061–1361 (RQQKQETYPG…LMEIFEQNLF (301 aa)) is C-terminal (CTD) region. Residues 1086–1099 (QVPPYPGLTHPPSP) show a composition bias toward pro residues. The segment covering 1186 to 1207 (PEKEKQKQEPKTPVAPKKDLKI) has biased composition (basic and acidic residues). Residues 1224-1234 (PTSAGKSTSDS) show a composition bias toward polar residues. Over residues 1236 to 1293 (ELFRRQAREKEERERALKHQAEQAERMRREQERMRTREDDDVQDQTRKAHEEARRRQE) the composition is skewed to basic and acidic residues. Over residues 1308-1319 (PAAPSPAQSSQP) the composition is skewed to low complexity. A compositionally biased stretch (basic and acidic residues) spans 1322–1334 (DQREMARKREQER).

This sequence belongs to the BET family.

It localises to the nucleus. Its subcellular location is the chromosome. In terms of biological role, chromatin reader protein that recognizes and binds acetylated histones and plays a key role in transmission of epigenetic memory across cell divisions and transcription regulation. Remains associated with acetylated chromatin throughout the entire cell cycle and provides epigenetic memory for postmitotic G1 gene transcription by preserving acetylated chromatin status and maintaining high-order chromatin structure. During interphase, plays a key role in regulating the transcription of signal-inducible genes by associating with the P-TEFb complex and recruiting it to promoters. The sequence is that of Bromodomain-containing protein 4B (brd4-b) from Xenopus laevis (African clawed frog).